The sequence spans 178 residues: ATP synthase subunit delta (178 aa).

The protein belongs to the ATPase delta chain family. F-type ATPases have 2 components, F(1) - the catalytic core - and F(0) - the membrane proton channel. F(1) has five subunits: alpha(3), beta(3), gamma(1), delta(1), epsilon(1). F(0) has three main subunits: a(1), b(2) and c(10-14). The alpha and beta chains form an alternating ring which encloses part of the gamma chain. F(1) is attached to F(0) by a central stalk formed by the gamma and epsilon chains, while a peripheral stalk is formed by the delta and b chains.

Its subcellular location is the cell inner membrane. In terms of biological role, f(1)F(0) ATP synthase produces ATP from ADP in the presence of a proton or sodium gradient. F-type ATPases consist of two structural domains, F(1) containing the extramembraneous catalytic core and F(0) containing the membrane proton channel, linked together by a central stalk and a peripheral stalk. During catalysis, ATP synthesis in the catalytic domain of F(1) is coupled via a rotary mechanism of the central stalk subunits to proton translocation. Functionally, this protein is part of the stalk that links CF(0) to CF(1). It either transmits conformational changes from CF(0) to CF(1) or is implicated in proton conduction. This chain is ATP synthase subunit delta, found in Pseudomonas syringae pv. syringae (strain B728a).